Here is a 662-residue protein sequence, read N- to C-terminus: Methionine--tRNA ligase (662 aa).

Positions 13-23 (PYTNGPCHLGH) match the 'HIGH' region motif. The Zn(2+) site is built by cysteine 144, cysteine 147, cysteine 156, and cysteine 160. A 'KMSKS' region motif is present at residues 326 to 330 (KFSKS). ATP is bound at residue lysine 329. The tRNA-binding domain occupies 564–662 (DFSKVEIKTG…KPVEPGTKIR (99 aa)).

The protein belongs to the class-I aminoacyl-tRNA synthetase family. MetG type 1 subfamily. As to quaternary structure, homodimer. Zn(2+) serves as cofactor.

The protein resides in the cytoplasm. It carries out the reaction tRNA(Met) + L-methionine + ATP = L-methionyl-tRNA(Met) + AMP + diphosphate. Is required not only for elongation of protein synthesis but also for the initiation of all mRNA translation through initiator tRNA(fMet) aminoacylation. This Methanoregula boonei (strain DSM 21154 / JCM 14090 / 6A8) protein is Methionine--tRNA ligase.